Consider the following 405-residue polypeptide: Formate-dependent phosphoribosylglycinamide formyltransferase (405 aa).

Residues 22-23 (EL) and Glu82 contribute to the N(1)-(5-phospho-beta-D-ribosyl)glycinamide site. Residues Arg115, Lys162, 167–172 (SSGKGQ), 202–205 (EGFI), and Glu210 each bind ATP. An ATP-grasp domain is found at 120–320 (RLAAETLGLP…EFELHARAIL (201 aa)). Residues Glu279 and Glu291 each contribute to the Mg(2+) site. N(1)-(5-phospho-beta-D-ribosyl)glycinamide contacts are provided by residues Asp298, Lys367, and 374-375 (RR).

It belongs to the PurK/PurT family. In terms of assembly, homodimer.

It catalyses the reaction N(1)-(5-phospho-beta-D-ribosyl)glycinamide + formate + ATP = N(2)-formyl-N(1)-(5-phospho-beta-D-ribosyl)glycinamide + ADP + phosphate + H(+). It participates in purine metabolism; IMP biosynthesis via de novo pathway; N(2)-formyl-N(1)-(5-phospho-D-ribosyl)glycinamide from N(1)-(5-phospho-D-ribosyl)glycinamide (formate route): step 1/1. Its function is as follows. Involved in the de novo purine biosynthesis. Catalyzes the transfer of formate to 5-phospho-ribosyl-glycinamide (GAR), producing 5-phospho-ribosyl-N-formylglycinamide (FGAR). Formate is provided by PurU via hydrolysis of 10-formyl-tetrahydrofolate. This chain is Formate-dependent phosphoribosylglycinamide formyltransferase, found in Leptothrix cholodnii (strain ATCC 51168 / LMG 8142 / SP-6) (Leptothrix discophora (strain SP-6)).